We begin with the raw amino-acid sequence, 145 residues long: Flagellar assembly factor FliW (145 aa).

Belongs to the FliW family. As to quaternary structure, interacts with translational regulator CsrA and flagellin(s).

The protein resides in the cytoplasm. In terms of biological role, acts as an anti-CsrA protein, binds CsrA and prevents it from repressing translation of its target genes, one of which is flagellin. Binds to flagellin and participates in the assembly of the flagellum. The sequence is that of Flagellar assembly factor FliW from Clostridium tetani (strain Massachusetts / E88).